We begin with the raw amino-acid sequence, 339 residues long: Phenylalanine--tRNA ligase alpha subunit (339 aa).

Glutamate 250 is a Mg(2+) binding site.

It belongs to the class-II aminoacyl-tRNA synthetase family. Phe-tRNA synthetase alpha subunit type 1 subfamily. In terms of assembly, tetramer of two alpha and two beta subunits. Requires Mg(2+) as cofactor.

The protein localises to the cytoplasm. It carries out the reaction tRNA(Phe) + L-phenylalanine + ATP = L-phenylalanyl-tRNA(Phe) + AMP + diphosphate + H(+). This Bacteroides fragilis (strain ATCC 25285 / DSM 2151 / CCUG 4856 / JCM 11019 / LMG 10263 / NCTC 9343 / Onslow / VPI 2553 / EN-2) protein is Phenylalanine--tRNA ligase alpha subunit.